A 62-amino-acid chain; its full sequence is Small ribosomal subunit protein uS14 (62 aa).

Positions 25, 28, 41, and 44 each coordinate Zn(2+).

It belongs to the universal ribosomal protein uS14 family. Zinc-binding uS14 subfamily. As to quaternary structure, part of the 30S ribosomal subunit. Contacts proteins S3 and S10. Zn(2+) is required as a cofactor.

In terms of biological role, binds 16S rRNA, required for the assembly of 30S particles and may also be responsible for determining the conformation of the 16S rRNA at the A site. The sequence is that of Small ribosomal subunit protein uS14 from Aquifex aeolicus (strain VF5).